The following is a 466-amino-acid chain: MSNGTIVQCIGAVVDIQFPRDQMPKIYEALTLADDTSQFAEKGLTLEVQQQLGDGVVRTIALGSSDGLRRGMKVVGTGAPISVPVGHGTLGRIMDVLGRPIDEAGPIESDEKRAIHQTAPRFDELSPSVELLETGIKVIDLVCPFAKGGKVGLFGGAGVGKTVNMMELINNIAKQHSGLSVFAGVGERTREGNDFYHEMEESKVLDKVAMVFGQMNEPPGNRLRVALTGLTMAEKFRDEGRDILFFVDNIYRYTLAGTEVSALLGRMPSAVGYQPTLAEEMGVLQERITSTKTGSITSIQAVYVPADDLTDPSPATTFQHLDSTVVLSRDIAALGIYPAVDPLDSSSRQLDPQVVGEEHYAVARGVQQTLQRYKELRDIIAILGMDELSPDDKQAVARARKIQRFLSQPFHVAEVFTGSPGKYVPLAETIRGFKMIVDGECDALPEQAFYMVGTIDEAFEKAKKLQ.

155-162 contacts ATP; the sequence is GGAGVGKT.

The protein belongs to the ATPase alpha/beta chains family. F-type ATPases have 2 components, CF(1) - the catalytic core - and CF(0) - the membrane proton channel. CF(1) has five subunits: alpha(3), beta(3), gamma(1), delta(1), epsilon(1). CF(0) has three main subunits: a(1), b(2) and c(9-12). The alpha and beta chains form an alternating ring which encloses part of the gamma chain. CF(1) is attached to CF(0) by a central stalk formed by the gamma and epsilon chains, while a peripheral stalk is formed by the delta and b chains.

The protein resides in the cell inner membrane. The enzyme catalyses ATP + H2O + 4 H(+)(in) = ADP + phosphate + 5 H(+)(out). Its function is as follows. Produces ATP from ADP in the presence of a proton gradient across the membrane. The catalytic sites are hosted primarily by the beta subunits. This Bordetella petrii (strain ATCC BAA-461 / DSM 12804 / CCUG 43448) protein is ATP synthase subunit beta.